The sequence spans 170 residues: Adenine phosphoribosyltransferase (170 aa).

The protein belongs to the purine/pyrimidine phosphoribosyltransferase family. Homodimer.

It localises to the cytoplasm. The catalysed reaction is AMP + diphosphate = 5-phospho-alpha-D-ribose 1-diphosphate + adenine. Its pathway is purine metabolism; AMP biosynthesis via salvage pathway; AMP from adenine: step 1/1. Its function is as follows. Catalyzes a salvage reaction resulting in the formation of AMP, that is energically less costly than de novo synthesis. This is Adenine phosphoribosyltransferase from Geobacillus sp. (strain WCH70).